The sequence spans 154 residues: Interleukin-2 (154 aa).

Residues 1–20 (MYRMQLLSCIALSLALITNS) form the signal peptide. Thr-23 carries an O-linked (GalNAc...) threonine glycan. The cysteines at positions 78 and 126 are disulfide-linked.

This sequence belongs to the IL-2 family.

The protein localises to the secreted. Functionally, cytokine produced by activated CD4-positive helper T-cells and to a lesser extend activated CD8-positive T-cells and natural killer (NK) cells that plays pivotal roles in the immune response and tolerance. Binds to a receptor complex composed of either the high-affinity trimeric IL-2R (IL2RA/CD25, IL2RB/CD122 and IL2RG/CD132) or the low-affinity dimeric IL-2R (IL2RB and IL2RG). Interaction with the receptor leads to oligomerization and conformation changes in the IL-2R subunits resulting in downstream signaling starting with phosphorylation of JAK1 and JAK3. In turn, JAK1 and JAK3 phosphorylate the receptor to form a docking site leading to the phosphorylation of several substrates including STAT5. This process leads to activation of several pathways including STAT, phosphoinositide-3-kinase/PI3K and mitogen-activated protein kinase/MAPK pathways. Functions as a T-cell growth factor and can increase NK-cell cytolytic activity as well. Promotes strong proliferation of activated B-cells and subsequently immunoglobulin production. Plays a pivotal role in regulating the adaptive immune system by controlling the survival and proliferation of regulatory T-cells, which are required for the maintenance of immune tolerance. Moreover, participates in the differentiation and homeostasis of effector T-cell subsets, including Th1, Th2, Th17 as well as memory CD8-positive T-cells. The protein is Interleukin-2 (IL2) of Saimiri sciureus (Common squirrel monkey).